Reading from the N-terminus, the 504-residue chain is L-carnitine/gamma-butyrobetaine antiporter (504 aa).

12 helical membrane passes run 10–30, 51–71, 92–112, 143–163, 195–215, 231–251, 263–283, 316–336, 347–367, 398–418, 446–466, and 475–495; these read IEPK…WLTV, WGWA…WLVF, IFMM…SIEI, GPLP…FFFV, FYLV…TPLV, LDAI…ACGL, SYLS…SFIM, WTVF…IFLA, LCFG…TVLG, WAAL…CFIA, LLVR…LLAL, and AIIA…LSFI.

The protein belongs to the BCCT transporter (TC 2.A.15) family. CaiT subfamily. Homotrimer.

Its subcellular location is the cell inner membrane. It carries out the reaction 4-(trimethylamino)butanoate(in) + (R)-carnitine(out) = 4-(trimethylamino)butanoate(out) + (R)-carnitine(in). The protein operates within amine and polyamine metabolism; carnitine metabolism. Functionally, catalyzes the exchange of L-carnitine for gamma-butyrobetaine. The protein is L-carnitine/gamma-butyrobetaine antiporter of Escherichia coli O81 (strain ED1a).